The sequence spans 401 residues: Probable aspartic-type endopeptidase TRV_05382 (401 aa).

The N-terminal stretch at 1-22 is a signal peptide; it reads MWHSPFFTAFTLFLGFFTLTLA. N-linked (GlcNAc...) asparagine glycosylation is found at N80 and N102. The Peptidase A1 domain maps to 94 to 398; that stretch reads FVNEITIGNN…DHDGPKMGFA (305 aa). The active site involves D110. A glycan (N-linked (GlcNAc...) asparagine) is linked at N282. Residue D292 is part of the active site. An N-linked (GlcNAc...) asparagine glycan is attached at N329.

It belongs to the peptidase A1 family.

The protein localises to the secreted. In terms of biological role, probable aspartic-type endopeptidase which contributes to virulence. In Trichophyton verrucosum (strain HKI 0517), this protein is Probable aspartic-type endopeptidase TRV_05382.